Consider the following 3102-residue polypeptide: Laminin subunit alpha lam-3 (3102 aa).

A signal peptide spans 1–16 (MRLWLGLLAVSNIALG). 3 N-linked (GlcNAc...) asparagine glycosylation sites follow: Asn19, Asn135, and Asn237. Residues 44 to 295 (SERGLFPNIF…SISDISIGGQ (252 aa)) enclose the Laminin N-terminal domain. Cystine bridges form between Cys296/Cys305, Cys298/Cys316, Cys318/Cys327, Cys330/Cys350, Cys353/Cys362, Cys355/Cys387, Cys390/Cys399, Cys402/Cys420, Cys423/Cys435, Cys425/Cys451, Cys453/Cys462, Cys465/Cys475, Cys478/Cys491, Cys480/Cys496, Cys498/Cys507, and Cys510/Cys525. 4 consecutive Laminin EGF-like domains span residues 296-352 (CICY…VCQQ), 353-422 (CQCF…ACRT), 423-477 (CECD…TCEP), and 478-527 (CPCN…GCQP). The 193-residue stretch at 548–740 (INNIGWHLTD…QDTLMGGVEV (193 aa)) folds into the Laminin IV type A 1 domain. 31 disulfides stabilise this stretch: Cys774–Cys783, Cys776–Cys790, Cys793–Cys802, Cys805–Cys822, Cys825–Cys838, Cys827–Cys858, Cys861–Cys870, Cys873–Cys886, Cys889–Cys903, Cys891–Cys910, Cys913–Cys922, Cys925–Cys938, Cys941–Cys953, Cys943–Cys960, Cys962–Cys971, Cys974–Cys985, Cys988–Cys1000, Cys990–Cys1007, Cys1009–Cys1018, Cys1021–Cys1033, Cys1036–Cys1049, Cys1038–Cys1056, Cys1058–Cys1067, Cys1070–Cys1083, Cys1086–Cys1098, Cys1088–Cys1105, Cys1107–Cys1116, Cys1119–Cys1131, Cys1134–Cys1144, Cys1137–Cys1151, and Cys1153–Cys1162. 10 Laminin EGF-like domains span residues 774–824 (CDCH…ACEQ), 825–888 (CECP…KCIE), 889–940 (CTCN…TCKP), 941–987 (CGCH…GCPA), 988–1035 (CDCN…GCQF), 1036–1085 (CHCN…GCED), 1086–1133 (CGCD…GCTE), 1134–1180 (CEPC…GCKL), 1181–1226 (CDCS…TCEP), and 1227–1283 (CGCN…GCTE). Asn796 is a glycosylation site (N-linked (GlcNAc...) asparagine). N-linked (GlcNAc...) asparagine glycosylation is present at Asn991. An N-linked (GlcNAc...) asparagine glycan is attached at Asn1027. An N-linked (GlcNAc...) asparagine glycan is attached at Asn1076. A glycan (N-linked (GlcNAc...) asparagine) is linked at Asn1164. Disulfide bonds link Cys1165/Cys1178, Cys1181/Cys1193, Cys1183/Cys1200, Cys1202/Cys1211, Cys1214/Cys1224, Cys1227/Cys1246, Cys1229/Cys1252, Cys1254/Cys1263, and Cys1266/Cys1281. The N-linked (GlcNAc...) asparagine glycan is linked to Asn1288. The 202-residue stretch at 1295 to 1496 (QSDLVWQQMY…STTKAIGVEK (202 aa)) folds into the Laminin IV type A 2 domain. Cystine bridges form between Cys1540–Cys1549, Cys1542–Cys1556, Cys1559–Cys1568, Cys1571–Cys1587, Cys1590–Cys1603, Cys1592–Cys1614, Cys1617–Cys1626, Cys1629–Cys1644, Cys1647–Cys1659, Cys1649–Cys1666, Cys1668–Cys1677, and Cys1680–Cys1691. Laminin EGF-like domains lie at 1540 to 1589 (CSCH…ACTK), 1590 to 1646 (CACP…TCSP), and 1647 to 1693 (CDCH…VCTS). N-linked (GlcNAc...) asparagine glycosylation is found at Asn1717, Asn1734, Asn1777, Asn1806, Asn1839, Asn1875, Asn1969, Asn1984, and Asn2048. The interval 2061–2084 (EAVSKMLGSEGSESGDANEESLRS) is disordered. Asn2091, Asn2193, Asn2369, and Asn2479 each carry an N-linked (GlcNAc...) asparagine glycan. 3 consecutive Laminin G-like domains span residues 2467-2644 (SQRG…TDGC), 2652-2839 (DKII…IGMC), and 2913-3088 (RYGL…AKAC). Cys2617 and Cys2644 are joined by a disulfide. N-linked (GlcNAc...) asparagine glycosylation is found at Asn2672 and Asn2686. The cysteines at positions 2814 and 2839 are disulfide-linked. 3 N-linked (GlcNAc...) asparagine glycosylation sites follow: Asn2932, Asn2959, and Asn3007. A disulfide bond links Cys3058 and Cys3088.

Laminin is a complex glycoprotein, consisting of three different polypeptide chains (alpha, beta, gamma), which are bound to each other by disulfide bonds into a cross-shaped molecule comprising one long and three short arms with globules at each end.

It is found in the secreted. Its subcellular location is the extracellular space. It localises to the extracellular matrix. The protein localises to the basement membrane. Functionally, binding to cells via a high affinity receptor, laminin is thought to mediate the attachment, migration and organization of cells into tissues during embryonic development by interacting with other extracellular matrix components. Required to assemble a stable basement membrane and for organizing receptor complexes and cytoskeletal components to the proper cell surfaces. During embryogenesis, does not require the presence of collagen type IV in order to associate with cell surfaces, prior to assembly of the prototypical basement membrane. Plays an important role in muscle contraction of the body. Probably plays a distinct role from the related laminin subunit alpha epi-1. In Caenorhabditis elegans, this protein is Laminin subunit alpha lam-3.